The primary structure comprises 198 residues: Autophagy-related protein 33 (198 aa).

A run of 3 helical transmembrane segments spans residues 17 to 37, 60 to 80, and 86 to 106; these read VSLGLLTGVSYSISSLALPAL, PVLALTSLASAPFLISFFLAP, and PYLLYTAILATLSSVAPILIP. The disordered stretch occupies residues 111 to 147; sequence APRRTASSAPRKSSRAKMEASYEVLGDAHSEPASDED. A compositionally biased stretch (low complexity) spans 112–121; the sequence is PRRTASSAPR. Residues 126-142 show a composition bias toward basic and acidic residues; the sequence is AKMEASYEVLGDAHSEP. A helical transmembrane segment spans residues 171–191; that stretch reads TAISALGFAMAVVGIWGDGAP.

The protein belongs to the ATG33 family.

It localises to the mitochondrion membrane. In terms of biological role, involved in the selective degradation of mitochondria via autophagy during starvation and at post-log phase. Autophagy is required for proper vegetative growth, asexual/sexual reproduction, and full virulence. Autophagy is particularly involved in the biosynthesis of deoxynivalenol (DON), an important virulence determinant. The polypeptide is Autophagy-related protein 33 (Gibberella zeae (strain ATCC MYA-4620 / CBS 123657 / FGSC 9075 / NRRL 31084 / PH-1) (Wheat head blight fungus)).